The chain runs to 180 residues: Large ribosomal subunit protein uL6c (180 aa).

This sequence belongs to the universal ribosomal protein uL6 family. In terms of assembly, part of the 50S ribosomal subunit.

Its subcellular location is the plastid. The protein localises to the chloroplast. Functionally, binds 23S rRNA. This is Large ribosomal subunit protein uL6c (rpl6) from Pyropia yezoensis (Susabi-nori).